Consider the following 131-residue polypeptide: Small ribosomal subunit protein uS11 (131 aa).

Belongs to the universal ribosomal protein uS11 family. In terms of assembly, part of the 30S ribosomal subunit. Interacts with proteins S7 and S18. Binds to IF-3.

Located on the platform of the 30S subunit, it bridges several disparate RNA helices of the 16S rRNA. Forms part of the Shine-Dalgarno cleft in the 70S ribosome. This chain is Small ribosomal subunit protein uS11, found in Helicobacter pylori (strain P12).